Reading from the N-terminus, the 361-residue chain is S-adenosylmethionine decarboxylase proenzyme (361 aa).

Catalysis depends on residues E13 and E16. S73 (schiff-base intermediate with substrate; via pyruvic acid) is an active-site residue. The residue at position 73 (S73) is a Pyruvic acid (Ser); by autocatalysis. C87 acts as the Proton donor; for catalytic activity in catalysis. Catalysis depends on proton acceptor; for processing activity residues S236 and H249.

Belongs to the eukaryotic AdoMetDC family. It depends on pyruvate as a cofactor. Post-translationally, is synthesized initially as an inactive proenzyme. Formation of the active enzyme involves a self-maturation process in which the active site pyruvoyl group is generated from an internal serine residue via an autocatalytic post-translational modification. Two non-identical subunits are generated from the proenzyme in this reaction, and the pyruvate is formed at the N-terminus of the alpha chain, which is derived from the carboxyl end of the proenzyme. The post-translation cleavage follows an unusual pathway, termed non-hydrolytic serinolysis, in which the side chain hydroxyl group of the serine supplies its oxygen atom to form the C-terminus of the beta chain, while the remainder of the serine residue undergoes an oxidative deamination to produce ammonia and the pyruvoyl group blocking the N-terminus of the alpha chain.

The catalysed reaction is S-adenosyl-L-methionine + H(+) = S-adenosyl 3-(methylsulfanyl)propylamine + CO2. It participates in amine and polyamine biosynthesis; S-adenosylmethioninamine biosynthesis; S-adenosylmethioninamine from S-adenosyl-L-methionine: step 1/1. This is S-adenosylmethionine decarboxylase proenzyme (SAMDC1) from Nicotiana sylvestris (Wood tobacco).